We begin with the raw amino-acid sequence, 176 residues long: RNA pyrophosphohydrolase (176 aa).

Residues 6–149 (GYRPNVGIVI…KRDVYRRVMK (144 aa)) enclose the Nudix hydrolase domain. A Nudix box motif is present at residues 38–59 (GGINPGESAEQAMYRELFEEVG).

Belongs to the Nudix hydrolase family. RppH subfamily. A divalent metal cation is required as a cofactor.

In terms of biological role, accelerates the degradation of transcripts by removing pyrophosphate from the 5'-end of triphosphorylated RNA, leading to a more labile monophosphorylated state that can stimulate subsequent ribonuclease cleavage. In Klebsiella pneumoniae (strain 342), this protein is RNA pyrophosphohydrolase.